The following is a 441-amino-acid chain: Methylenetetrahydrofolate--tRNA-(uracil-5-)-methyltransferase TrmFO (441 aa).

10–15 (GAGLAG) is an FAD binding site.

The protein belongs to the MnmG family. TrmFO subfamily. Requires FAD as cofactor.

It localises to the cytoplasm. The enzyme catalyses uridine(54) in tRNA + (6R)-5,10-methylene-5,6,7,8-tetrahydrofolate + NADH + H(+) = 5-methyluridine(54) in tRNA + (6S)-5,6,7,8-tetrahydrofolate + NAD(+). It catalyses the reaction uridine(54) in tRNA + (6R)-5,10-methylene-5,6,7,8-tetrahydrofolate + NADPH + H(+) = 5-methyluridine(54) in tRNA + (6S)-5,6,7,8-tetrahydrofolate + NADP(+). In terms of biological role, catalyzes the folate-dependent formation of 5-methyl-uridine at position 54 (M-5-U54) in all tRNAs. This Desulforamulus reducens (strain ATCC BAA-1160 / DSM 100696 / MI-1) (Desulfotomaculum reducens) protein is Methylenetetrahydrofolate--tRNA-(uracil-5-)-methyltransferase TrmFO.